Consider the following 613-residue polypeptide: MNSPGGRGKKKGSAGSSSAPPAAGASPSAPSGPAPPAPPAGAAAAAAASPHKRNLYYFSYPLFAAFALLRFVAFQLGLLVAWLCERLSRGALMAAKSSRAGDAPEPGGAAERVRACHKRAFECISMALRIDEDERAGQKEQAVEWYKKGIEELERGIAVLVVGQGDQCERARRLQSKMMTNLAMAKDRLQLLEKLQADLQISKPQMEVYNDSTNLACRNGHLQSESGAVPKKKDPLTHTSNSLPRSKTVAKTGSTGLSGHHRTPSYSGISTASVSRPAANPATSTHKAAPKNSRTNKPSTPTPAARKKKDTKVFRNVDSNLANLILNEIVDSGPAVKFDDIAGQELAKQALQEIVILPSLRPELFTGLRAPARGLLLFGPPGNGKTMLAKAVAAESNATFFNISAASLTSKYVGEGEKLVRALFAVARELQPSIIFIDEVDSLLCERREGEHDASRRLKTEFLIEFDGVQSSGEDRILVMGATNRPQELDDAVLRRFTKRVYVSLPNEETRLILLKNLLSKQGSPLTQKELAQLARMTDGYSGSDLTALAKDAALGPIRELKPEQVKNMSASEMRNIKLSDFTESLKKIKRSLSPQTLEAYIRWNKDFGDTTV.

The disordered stretch occupies residues 1-42; sequence MNSPGGRGKKKGSAGSSSAPPAAGASPSAPSGPAPPAPPAGA. Topologically, residues 1-61 are cytoplasmic; it reads MNSPGGRGKK…KRNLYYFSYP (61 aa). Positions 13 to 29 are enriched in low complexity; that stretch reads SAGSSSAPPAAGASPSA. The segment covering 30–39 has biased composition (pro residues); it reads PSGPAPPAPP. The segment at residues 62-82 is an intramembrane region (helical); the sequence is LFAAFALLRFVAFQLGLLVAW. Over 83–613 the chain is Cytoplasmic; that stretch reads LCERLSRGAL…WNKDFGDTTV (531 aa). The MIT domain occupies 117 to 192; the sequence is HKRAFECISM…AMAKDRLQLL (76 aa). Residues 224–312 are disordered; the sequence is SESGAVPKKK…PAARKKKDTK (89 aa). Composition is skewed to polar residues over residues 237–257, 264–274, and 281–299; these read THTS…STGL, PSYSGISTASV, and PATS…NKPS. ATP is bound at residue 379–386; sequence GPPGNGKT.

This sequence belongs to the AAA ATPase family. Spastin subfamily. Homohexamer. The homohexamer is stabilized by ATP-binding. The homohexamer may adopt a ring conformation through which microtubules pass prior to being severed. Interacts with microtubules.

It localises to the membrane. The protein resides in the cytoplasm. The protein localises to the cytoskeleton. Its subcellular location is the microtubule organizing center. It is found in the centrosome. It localises to the perinuclear region. The protein resides in the nucleus. The enzyme catalyses n ATP + n H2O + a microtubule = n ADP + n phosphate + (n+1) alpha/beta tubulin heterodimers.. Its function is as follows. ATP-dependent microtubule severing protein that specifically recognizes and cuts microtubules that are polyglutamylated. Preferentially recognizes and acts on microtubules decorated with short polyglutamate tails: severing activity increases as the number of glutamates per tubulin rises from one to eight, but decreases beyond this glutamylation threshold. Microtubule severing promotes reorganization of cellular microtubule arrays and the release of microtubules from the centrosome following nucleation. Required for membrane traffic from the endoplasmic reticulum (ER) to the Golgi and for completion of the abscission stage of cytokinesis. Also plays a role in axon growth and the formation of axonal branches. This chain is Spastin, found in Gallus gallus (Chicken).